The chain runs to 440 residues: Chromosome partition protein MukF (440 aa).

Positions 208–236 (LDETSGNLRELQDTLNAAGDKLQSQLLRI) are leucine-zipper.

It belongs to the MukF family. In terms of assembly, interacts, and probably forms a ternary complex, with MukE and MukB via its C-terminal region. The complex formation is stimulated by calcium or magnesium. It is required for an interaction between MukE and MukB.

It localises to the cytoplasm. The protein resides in the nucleoid. In terms of biological role, involved in chromosome condensation, segregation and cell cycle progression. May participate in facilitating chromosome segregation by condensation DNA from both sides of a centrally located replisome during cell division. Not required for mini-F plasmid partitioning. Probably acts via its interaction with MukB and MukE. Overexpression results in anucleate cells. It has a calcium binding activity. The chain is Chromosome partition protein MukF from Histophilus somni (strain 2336) (Haemophilus somnus).